The chain runs to 191 residues: Ferric nitrobindin-like protein (191 aa).

Positions 20–26 (GNWAGAG) match the GXWXGXG motif.

This sequence belongs to the nitrobindin family.

In Streptomyces avermitilis (strain ATCC 31267 / DSM 46492 / JCM 5070 / NBRC 14893 / NCIMB 12804 / NRRL 8165 / MA-4680), this protein is Ferric nitrobindin-like protein.